The sequence spans 324 residues: Beta-ketoacyl-[acyl-carrier-protein] synthase III (324 aa).

Residues cysteine 112 and histidine 249 contribute to the active site. An ACP-binding region spans residues 250–254 (QANDR). Residue asparagine 279 is part of the active site.

Belongs to the thiolase-like superfamily. FabH family. As to quaternary structure, homodimer.

Its subcellular location is the cytoplasm. It catalyses the reaction malonyl-[ACP] + acetyl-CoA + H(+) = 3-oxobutanoyl-[ACP] + CO2 + CoA. It participates in lipid metabolism; fatty acid biosynthesis. Its function is as follows. Catalyzes the condensation reaction of fatty acid synthesis by the addition to an acyl acceptor of two carbons from malonyl-ACP. Catalyzes the first condensation reaction which initiates fatty acid synthesis and may therefore play a role in governing the total rate of fatty acid production. Possesses both acetoacetyl-ACP synthase and acetyl transacylase activities. Its substrate specificity determines the biosynthesis of branched-chain and/or straight-chain of fatty acids. The protein is Beta-ketoacyl-[acyl-carrier-protein] synthase III of Streptococcus pneumoniae serotype 19F (strain G54).